A 129-amino-acid polypeptide reads, in one-letter code: Gas vesicle protein C (129 aa).

3 repeats span residues Val19–Phe51, His52–Phe84, and His85–Phe117. Residues Val19 to Phe117 are 3 X 33 AA tandem repeats.

The protein belongs to the gas vesicle GvpC family.

The protein localises to the gas vesicle. Confers stability, involved in shaping gas vesicles, hollow, gas filled proteinaceous nanostructures. During planktonic growth they allow positioning of the organism at a favorable depth for light or nutrient acquisition. In terms of biological role, cluster expression in E.coli (gvpA1-gvpA2-gvpC-gvpN-gvpJ-gvpK-gvpF-gvpG-gvpV-gvpW) allows cells to float and produces irregularly shaped gas vesicles. The polypeptide is Gas vesicle protein C (Nostoc sp. (strain PCC 7120 / SAG 25.82 / UTEX 2576)).